A 169-amino-acid chain; its full sequence is Ribosome maturation factor RimM (169 aa).

The 73-residue stretch at 97-169 (PGEYYWYQLI…VITVDWDMNF (73 aa)) folds into the PRC barrel domain.

The protein belongs to the RimM family. In terms of assembly, binds ribosomal protein uS19.

It localises to the cytoplasm. Functionally, an accessory protein needed during the final step in the assembly of 30S ribosomal subunit, possibly for assembly of the head region. Essential for efficient processing of 16S rRNA. May be needed both before and after RbfA during the maturation of 16S rRNA. It has affinity for free ribosomal 30S subunits but not for 70S ribosomes. The chain is Ribosome maturation factor RimM from Legionella pneumophila (strain Paris).